The sequence spans 881 residues: Plakophilin-2 (881 aa).

The required for interaction with influenza A virus RNA polymerase subunit PB1 stretch occupies residues 1–348 (MAAPGAPAEY…FTDSQLGNAD (348 aa)). Positions 1–360 (MAAPGAPAEY…MTLERAVSML (360 aa)) are required for binding to single-stranded DNA. Ser-44 carries the phosphoserine modification. Arg-46 is subject to Omega-N-methylarginine. Residue Ser-82 is modified to Phosphoserine; by MARK3. Phosphoserine is present on residues Ser-132, Ser-135, Ser-151, Ser-154, Ser-155, Ser-169, and Ser-172. Position 177 is a phosphothreonine (Thr-177). Residues Ser-183, Ser-197, Ser-251, Ser-294, and Ser-329 each carry the phosphoserine modification. Residues 282–314 (QNRASRSSWHQSSFHSTRTLREAGPSVAVDSSG) form a disordered region. Over residues 286–297 (SRSSWHQSSFHS) the composition is skewed to low complexity. ARM repeat units lie at residues 341–383 (DSQL…ECFQ), 385–424 (SEAR…NLVF), 427–467 (NDNK…NLRS), 571–616 (DGRK…NLSY), 671–711 (PKGV…NLTA), 719–758 (SVAQ…NLSR), 763–804 (QNEI…NIIQ), and 807–849 (YQNA…SLWA).

The protein belongs to the beta-catenin family. Interacts with DSC2. Interacts with JUP. Interacts with KRT5/CK5, KRT8/CK8, KRT14/CK14, KRT18/CK18 and VIM. Interacts (via N-terminus) with MARK3/C-TAK1. Interacts with DSP. Interacts with DSG1, DSG2 and DSG3. Interacts (via N-terminus) with CTNNB1. Interacts with CDH1. Interacts with the RNA polymerase III (Pol III) complex proteins POLR3A/RPC155, POLR3F/RPC39 and POLR3C/RPC82. Interacts with CTNNA3. Interacts (via N-terminus) with SCN5A/Nav1.5. Interacts with ANK3/ANKG and GJA1/CX43. In terms of assembly, (Microbial infection) Interacts (via N-terminus) with influenza A virus RNA polymerase subunit PB1 (via C-terminus); the interaction competitively inhibits the interaction between the subunits PB1 and PB2. Expressed at intercalated disks in the heart (at protein level). Expressed in gingival epithelial, endothelial and fibroblast cells (at protein level). Faintly expressed in tracheal epithelial cells (at protein level). Widely expressed. Found at desmosomal plaques in simple and stratified epithelia and in non-epithelial tissues such as myocardium and lymph node follicles. In most stratified epithelia found in the desmosomes of the basal cell layer and seems to be absent from suprabasal strata. As to expression, (Microbial infection) Abundantly expressed in tracheal epithelial cells following influenza A virus infection (at protein level).

The protein resides in the nucleus. The protein localises to the cell junction. Its subcellular location is the desmosome. It localises to the cytoplasm. A component of desmosome cell-cell junctions which are required for positive regulation of cellular adhesion. Regulates focal adhesion turnover resulting in changes in focal adhesion size, cell adhesion and cell spreading, potentially via transcriptional modulation of beta-integrins. Required to maintain gingival epithelial barrier function. Important component of the desmosome that is also required for localization of desmosome component proteins such as DSC2, DSG2 and JUP to the desmosome cell-cell junction. Required for the formation of desmosome cell junctions in cardiomyocytes, thereby required for the correct formation of the heart, specifically trabeculation and formation of the atria walls. Loss of desmosome cell junctions leads to mis-localization of DSP and DSG2 resulting in disruption of cell-cell adhesion and disordered intermediate filaments. Modulates profibrotic gene expression in cardiomyocytes via regulation of DSP expression and subsequent activation of downstream TGFB1 and MAPK14/p38 MAPK signaling. Required for cardiac sodium current propagation and electrical synchrony in cardiac myocytes, via ANK3 stabilization and modulation of SCN5A/Nav1.5 localization to cell-cell junctions. Required for mitochondrial function, nuclear envelope integrity and positive regulation of SIRT3 transcription via maintaining DES localization at its nuclear envelope and cell tip anchoring points, and thereby preserving regulation of the transcriptional program. Maintenance of nuclear envelope integrity protects against DNA damage and transcriptional dysregulation of genes, especially those involved in the electron transport chain, thereby preserving mitochondrial function and protecting against superoxide radical anion generation. Binds single-stranded DNA (ssDNA). May regulate the localization of GJA1 to gap junctions in intercalated disks of the heart. Involved in the inhibition of viral infection by influenza A viruses (IAV). Acts as a host restriction factor for IAV viral propagation, potentially via disrupting the interaction of IAV polymerase complex proteins. This chain is Plakophilin-2, found in Homo sapiens (Human).